A 452-amino-acid chain; its full sequence is Phosphoglucosamine mutase (452 aa).

Serine 101 serves as the catalytic Phosphoserine intermediate. Mg(2+) is bound by residues serine 101, aspartate 241, aspartate 243, and aspartate 245. Serine 101 carries the post-translational modification Phosphoserine.

The protein belongs to the phosphohexose mutase family. Mg(2+) is required as a cofactor. Activated by phosphorylation.

The enzyme catalyses alpha-D-glucosamine 1-phosphate = D-glucosamine 6-phosphate. Catalyzes the conversion of glucosamine-6-phosphate to glucosamine-1-phosphate. The sequence is that of Phosphoglucosamine mutase from Lactococcus lactis subsp. cremoris (strain SK11).